We begin with the raw amino-acid sequence, 323 residues long: Ferrochelatase (323 aa).

Fe cation contacts are provided by histidine 196 and glutamate 277.

Belongs to the ferrochelatase family.

It localises to the cytoplasm. It carries out the reaction heme b + 2 H(+) = protoporphyrin IX + Fe(2+). It participates in porphyrin-containing compound metabolism; protoheme biosynthesis; protoheme from protoporphyrin-IX: step 1/1. Catalyzes the ferrous insertion into protoporphyrin IX. The chain is Ferrochelatase from Haemophilus influenzae (strain PittEE).